The primary structure comprises 393 residues: N-acyl-phosphatidylethanolamine-hydrolyzing phospholipase D (393 aa).

Met1 bears the N-acetylmethionine mark. The segment covering Met1–Tyr16 has biased composition (polar residues). Positions Met1–Ser40 are disordered. 2 residues coordinate Zn(2+): His185 and His187. Tyr188 provides a ligand contact to an N-acyl-1,2-diacyl-sn-glycero-3-phosphoethanolamine. Zn(2+) contacts are provided by Asp189, His190, and His253. Positions 256 and 260 each coordinate deoxycholate. Asp284 is a binding site for Zn(2+). His321 serves as a coordination point for an N-acyl-1,2-diacyl-sn-glycero-3-phosphoethanolamine. Residue His343 participates in Zn(2+) binding. Position 348 (Ala348) interacts with deoxycholate.

It belongs to the NAPE-PLD family. As to quaternary structure, homodimer. Bile acids promote the assembly of inactive monomers into an active dimer and enable catalysis. Zn(2+) is required as a cofactor. In terms of tissue distribution, widely expressed. Highest expression in brain, kidney and testis (at protein level). Expressed in adipose tissue (at protein level).

It localises to the golgi apparatus membrane. It is found in the early endosome membrane. The protein resides in the nucleus envelope. Its subcellular location is the nucleus. The protein localises to the nucleoplasm. The enzyme catalyses an N-acyl-1,2-diacyl-sn-glycero-3-phosphoethanolamine + H2O = an N-acylethanolamine + a 1,2-diacyl-sn-glycero-3-phosphate + H(+). It carries out the reaction N-butanoyl-1-hexadecanoyl-2-(9Z,12Z-octadecadienoyl)-sn-glycero-3-phosphoethanolamine + H2O = N-butanoyl ethanolamine + 1-hexadecanoyl-2-(9Z,12Z-octadecadienoyl)-sn-glycero-3-phosphate + H(+). The catalysed reaction is N-hexanoyl-1-hexadecanoyl-2-(9Z,12Z-octadecadienoyl)-sn-glycero-3-phosphoethanolamine + H2O = N-hexanoyl ethanolamine + 1-hexadecanoyl-2-(9Z,12Z-octadecadienoyl)-sn-glycero-3-phosphate + H(+). It catalyses the reaction N-octanoyl-1-hexadecanoyl-2-(9Z,12Z-octadecadienoyl)-sn-glycero-3-phosphoethanolamine + H2O = N-octanoyl ethanolamine + 1-hexadecanoyl-2-(9Z,12Z-octadecadienoyl)-sn-glycero-3-phosphate + H(+). The enzyme catalyses N-decanoyl-1-hexadecanoyl-2-(9Z,12Z-octadecadienoyl)-sn-glycero-3-phosphoethanolamine + H2O = N-decanoyl ethanolamine + 1-hexadecanoyl-2-(9Z,12Z-octadecadienoyl)-sn-glycero-3-phosphate + H(+). It carries out the reaction N-dodecanoyl-1,2-di-(9Z-octadecenoyl)-sn-glycero-3-phosphoethanolamine + H2O = N-dodecanoylethanolamine + 1,2-di-(9Z-octadecenoyl)-sn-glycero-3-phosphate + H(+). The catalysed reaction is N-tetradecanoyl-1,2-di-(9Z-octadecenoyl)-sn-glycero-3-phosphoethanolamine + H2O = N-tetradecanoylethanolamine + 1,2-di-(9Z-octadecenoyl)-sn-glycero-3-phosphate + H(+). It catalyses the reaction N-hexadecanoyl-1,2-di-(9Z-octadecenoyl)-sn-glycero-3-phosphoethanolamine + H2O = N-hexadecanoylethanolamine + 1,2-di-(9Z-octadecenoyl)-sn-glycero-3-phosphate + H(+). The enzyme catalyses N,1-dihexadecanoyl-2-(9Z,12Z-octadecadienoyl)-sn-glycero-3-phosphoethanolamine + H2O = 1-hexadecanoyl-2-(9Z,12Z-octadecadienoyl)-sn-glycero-3-phosphate + N-hexadecanoylethanolamine + H(+). It carries out the reaction N-octadecanoyl-1,2-di-(9Z-octadecenoyl)-sn-glycero-3-phosphoethanolamine + H2O = N-octadecanoyl ethanolamine + 1,2-di-(9Z-octadecenoyl)-sn-glycero-3-phosphate + H(+). The catalysed reaction is N,1,2-tri-(9Z-octadecenoyl)-sn-glycero-3-phosphoethanolamine + H2O = N-(9Z-octadecenoyl) ethanolamine + 1,2-di-(9Z-octadecenoyl)-sn-glycero-3-phosphate + H(+). It catalyses the reaction N-(5Z,8Z,11Z,14Z-eicosatetraenoyl)-1,2-diacyl-sn-glycero-3-phosphoethanolamine + H2O = N-(5Z,8Z,11Z,14Z-eicosatetraenoyl)-ethanolamine + a 1,2-diacyl-sn-glycero-3-phosphate + H(+). The enzyme catalyses N-(5Z,8Z,11Z,14Z-eicosatetraenoyl)-1,2-di-(9Z-octadecenoyl)-sn-glycero-3-phosphoethanolamine + H2O = N-(5Z,8Z,11Z,14Z-eicosatetraenoyl)-ethanolamine + 1,2-di-(9Z-octadecenoyl)-sn-glycero-3-phosphate + H(+). It carries out the reaction 1-O-(1Z-octadecenoyl)-2-(9Z-octadecenoyl)-sn-glycero-3-phospho-N-hexadecanoyl-ethanolamine + H2O = 1-O-(1Z-octadecenoyl)-2-(9Z-octadecenoyl)-sn-glycero-3-phosphate + N-hexadecanoylethanolamine + H(+). The catalysed reaction is N,1-diacyl-sn-glycero-3-phosphoethanolamine + H2O = an N-acylethanolamine + a 1-acyl-sn-glycero-3-phosphate + H(+). It catalyses the reaction N,1-dihexadecanoyl-sn-glycero-3-phosphoethanolamine + H2O = N-hexadecanoylethanolamine + 1-hexadecanoyl-sn-glycero-3-phosphate + H(+). The enzyme catalyses N-(5Z,8Z,11Z,14Z-eicosatetraenoyl)-1-(9Z-octadecenoyl)-sn-glycero-3-phosphoethanolamine + H2O = N-(5Z,8Z,11Z,14Z-eicosatetraenoyl)-ethanolamine + 1-(9Z-octadecenoyl)-sn-glycero-3-phosphate + H(+). With respect to regulation, activated by divalent cations. Activated by bile acids and their conjugates, except for lithocholic acid which is rather inhibitory. Binding of deoxycholic acid favors the selective release of anandamide and likely other unsatured long FAEs. Inhibited by phosphatidylethanolamines. In terms of biological role, D-type phospholipase that hydrolyzes N-acyl-phosphatidylethanolamines (NAPEs) to produce bioactive N-acylethanolamines/fatty acid ethanolamides (NAEs/FAEs) and phosphatidic acid. Cleaves the terminal phosphodiester bond of diacyl- and alkenylacyl-NAPEs, primarily playing a role in the generation of long-chain saturated and monounsaturated NAEs in the brain. May control NAPE homeostasis in dopaminergic neuron membranes and regulate neuron survival, partly through RAC1 activation. As a regulator of lipid metabolism in the adipose tissue, mediates the crosstalk between adipocytes, gut microbiota and immune cells to control body temperature and weight. In particular, regulates energy homeostasis by promoting cold-induced brown or beige adipocyte differentiation program to generate heat from fatty acids and glucose. Has limited D-type phospholipase activity toward N-acyl lyso-NAPEs. The protein is N-acyl-phosphatidylethanolamine-hydrolyzing phospholipase D (NAPEPLD) of Homo sapiens (Human).